Reading from the N-terminus, the 1290-residue chain is 1-phosphatidylinositol 4,5-bisphosphate phosphodiesterase gamma-1 (1290 aa).

Residue Ala-2 is modified to N-acetylalanine. One can recognise a PH 1 domain in the interval 27–142 (RSLEVGTVMT…WIKGLTWLME (116 aa)). In terms of domain architecture, EF-hand spans 152–187 (QIERWLRKQFYSVDRNREDRISAKDLKNMLSQVNYR). Asp-165, Asn-167, Glu-169, Arg-171, and Asp-176 together coordinate Ca(2+). Residues 320–464 (DTMNNPLSHY…LKRKILIKHK (145 aa)) form the PI-PLC X-box domain. Catalysis depends on residues His-335 and His-380. Residues 489–523 (SIKNGILYLEDPVNHEWYPHYFVLTSSKIYYSEET) form the PH 2; first part domain. Position 506 is a phosphotyrosine (Tyr-506). Residues 522–544 (ETSSDQGNEDEEEPKEVSSSTEL) are disordered. SH2 domains lie at 550–657 (WFHG…SEPV) and 668–756 (WYHA…RYPI). Tyr-771 bears the Phosphotyrosine; by SYK mark. Tyr-775 is modified (phosphotyrosine). Phosphotyrosine; by ITK, SYK and TXK is present on Tyr-783. The region spanning 791–851 (TFKCAVKALF…PSNYVEEMVN (61 aa)) is the SH3 domain. The 37-residue stretch at 895 to 931 (FVFSISMASVAHWSLDVAADSQEELQDWVKKIREVAQ) folds into the PH 2; second part domain. The region spanning 953 to 1070 (LSELVVYCRP…GYVLQPSTMR (118 aa)) is the PI-PLC Y-box domain. Position 977 is a phosphotyrosine (Tyr-977). In terms of domain architecture, C2 spans 1071–1194 (DEAFDPFDKS…TGYRAVPLKN (124 aa)). A phosphoserine mark is found at Ser-1221, Pro-1222, Ser-1227, Ser-1233, and Ser-1248. Phosphotyrosine is present on Tyr-1253. At Ser-1263 the chain carries Phosphoserine. Residues 1271 to 1290 (FDSRERRAPRRTRVNGDNRL) form a disordered region.

Interacts with AGAP2 via its SH3 domain. Interacts (via SH2 domain) with RET. Interacts with FLT1 (tyrosine-phosphorylated). Interacts (via SH2 domain) with FGFR1, FGFR2, FGFR3 and FGFR4 (phosphorylated). Interacts with LAT (phosphorylated) upon TCR activation. Interacts (via SH3 domain) with the Pro-rich domain of TNK1. Associates with BLNK, VAV1, GRB2 and NCK1 in a B-cell antigen receptor-dependent fashion. Interacts with CBLB in activated T-cells; which inhibits phosphorylation. Interacts with SHB. Interacts (via SH3 domain) with the Arg/Gly-rich-flanked Pro-rich domains of KHDRBS1/SAM68. This interaction is selectively regulated by arginine methylation of KHDRBS1/SAM68. Interacts with INPP5D/SHIP1, THEMIS and CLNK. Interacts with AXL, FLT4 and KIT. Interacts with RALGPS1. Interacts (via the SH2 domains) with VIL1 (phosphorylated at C-terminus tyrosine phosphorylation sites). Interacts (via SH2 domain) with PDGFRA and PDGFRB (tyrosine phosphorylated). Interacts with PIP5K1C. Interacts with NTRK1 and NTRK2 (phosphorylated upon ligand-binding). Interacts with SYK; activates PLCG1. Interacts with GRB2, LAT and THEMIS upon TCR activation in thymocytes. Interacts with TESPA1; the association is increased with prolonged stimulation of the TCR and may facilitate the assembly of the LAT signalosome. Interacts (via C-terminal proline-rich domain (PRD)) with PLCG1 (via SH3 domain); this interaction leads to guanine nucleotide exchange from PlCG1 to DNM1 and enhances DNM1-dependent endocytosis. In terms of assembly, (Microbial infection) Interacts (via SH3 domain) with HEV ORF3 protein. The cofactor is Ca(2+). In terms of processing, tyrosine phosphorylated in response to signaling via activated FLT3, KIT and PDGFRA. Tyrosine phosphorylated by activated FGFR1, FGFR2, FGFR3 and FGFR4. Tyrosine phosphorylated by activated FLT1 and KDR. Tyrosine phosphorylated by activated PDGFRB. The receptor-mediated activation of PLCG1 involves its phosphorylation by tyrosine kinases, in response to ligation of a variety of growth factor receptors and immune system receptors. For instance, SYK phosphorylates and activates PLCG1 in response to ligation of the B-cell receptor. May be dephosphorylated by PTPRJ. Phosphorylated by ITK and TXK on Tyr-783 upon TCR activation in T-cells. Ubiquitinated by CBLB in activated T-cells.

It localises to the cell projection. The protein resides in the lamellipodium. Its subcellular location is the ruffle. The catalysed reaction is a 1,2-diacyl-sn-glycero-3-phospho-(1D-myo-inositol-4,5-bisphosphate) + H2O = 1D-myo-inositol 1,4,5-trisphosphate + a 1,2-diacyl-sn-glycerol + H(+). The enzyme catalyses a 1,2-diacyl-sn-glycero-3-phospho-(1D-myo-inositol) + H2O = 1D-myo-inositol 1-phosphate + a 1,2-diacyl-sn-glycerol + H(+). With respect to regulation, activated by phosphorylation on tyrosine residues. Mediates the production of the second messenger molecules diacylglycerol (DAG) and inositol 1,4,5-trisphosphate (IP3). Plays an important role in the regulation of intracellular signaling cascades. Becomes activated in response to ligand-mediated activation of receptor-type tyrosine kinases, such as PDGFRA, PDGFRB, EGFR, FGFR1, FGFR2, FGFR3 and FGFR4. Plays a role in actin reorganization and cell migration. Guanine nucleotide exchange factor that binds the GTPase DNM1 and catalyzes the dissociation of GDP, allowing a GTP molecule to bind in its place, therefore enhancing DNM1-dependent endocytosis. This Homo sapiens (Human) protein is 1-phosphatidylinositol 4,5-bisphosphate phosphodiesterase gamma-1.